A 173-amino-acid chain; its full sequence is Cell division protein SepF (173 aa).

Residues 31-82 (FEDFDEPLDERPSRNRSPRDDSRNNAVTDSSDHSPSRNERRSPAPAPATADL) are disordered. 2 stretches are compositionally biased toward basic and acidic residues: residues 39–53 (DERPSRNRSPRDDSR) and 60–72 (SSDHSPSRNERRS).

The protein belongs to the SepF family. As to quaternary structure, homodimer. Interacts with FtsZ.

It is found in the cytoplasm. Its function is as follows. Cell division protein that is part of the divisome complex and is recruited early to the Z-ring. Probably stimulates Z-ring formation, perhaps through the cross-linking of FtsZ protofilaments. Its function overlaps with FtsA. This chain is Cell division protein SepF, found in Thermobifida fusca (strain YX).